Reading from the N-terminus, the 81-residue chain is ATP synthase subunit c (81 aa).

2 helical membrane passes run 5–25 (IAAG…IGAG) and 57–77 (VGLV…FVFA).

The protein belongs to the ATPase C chain family. As to quaternary structure, F-type ATPases have 2 components, F(1) - the catalytic core - and F(0) - the membrane proton channel. F(1) has five subunits: alpha(3), beta(3), gamma(1), delta(1), epsilon(1). F(0) has three main subunits: a(1), b(2) and c(10-14). The alpha and beta chains form an alternating ring which encloses part of the gamma chain. F(1) is attached to F(0) by a central stalk formed by the gamma and epsilon chains, while a peripheral stalk is formed by the delta and b chains.

The protein resides in the cell membrane. F(1)F(0) ATP synthase produces ATP from ADP in the presence of a proton or sodium gradient. F-type ATPases consist of two structural domains, F(1) containing the extramembraneous catalytic core and F(0) containing the membrane proton channel, linked together by a central stalk and a peripheral stalk. During catalysis, ATP synthesis in the catalytic domain of F(1) is coupled via a rotary mechanism of the central stalk subunits to proton translocation. Functionally, key component of the F(0) channel; it plays a direct role in translocation across the membrane. A homomeric c-ring of between 10-14 subunits forms the central stalk rotor element with the F(1) delta and epsilon subunits. This Mycobacterium bovis (strain ATCC BAA-935 / AF2122/97) protein is ATP synthase subunit c.